Reading from the N-terminus, the 442-residue chain is MTSPNNYLAKIKVVGVGGGGVNAVNRMIEEGLKGVEFIAVNTDSQALMFSDADVKLDIGREATRGLGAGANPEVGRASAEDHKNEIEETIKGADMVFVTAGEGGGTGTGAAPVVAGIAKKMGALTIGVVTKPFEFEGRRRTRQAEEGIAALKEVCDTLIVIPNDRLLELGDANLSIMEAFRAADEVLHNGVQGITNLITIPGVINVDFADVRSVMSEAGSALMGVGSARGDNRVVSATEQAINSPLLEATMDGATGVLLSFAGGSDLGLMEVNAAASMVRERSDEDVNLIFGTIIDDNLGDEVRVTVIATGFDAARASAAENRRAGISAAPAAEPVQQQVPTTNATLPPEKESIFGGAREENDPYLSRSAGARHRIEETRSGGGLFTTGNDRDYRRDERREDHRDERRDERRDDRSYDRRDDRRDDRRDDRGDDLDVPSFLQ.

Residues 18–22, 105–107, E136, R140, and D184 contribute to the GTP site; these read GGGVN and GTG. Residues 329–341 show a composition bias toward low complexity; sequence AAPAAEPVQQQVP. Residues 329–442 are disordered; the sequence is AAPAAEPVQQ…DDLDVPSFLQ (114 aa). Composition is skewed to basic and acidic residues over residues 349–362 and 390–431; these read PEKESIFGGAREEN and NDRD…RDDR.

The protein belongs to the FtsZ family. Homodimer. Polymerizes to form a dynamic ring structure in a strictly GTP-dependent manner. Interacts directly with several other division proteins.

It localises to the cytoplasm. In terms of biological role, essential cell division protein that forms a contractile ring structure (Z ring) at the future cell division site. The regulation of the ring assembly controls the timing and the location of cell division. One of the functions of the FtsZ ring is to recruit other cell division proteins to the septum to produce a new cell wall between the dividing cells. Binds GTP and shows GTPase activity. The protein is Cell division protein FtsZ of Corynebacterium glutamicum (strain ATCC 13032 / DSM 20300 / JCM 1318 / BCRC 11384 / CCUG 27702 / LMG 3730 / NBRC 12168 / NCIMB 10025 / NRRL B-2784 / 534).